We begin with the raw amino-acid sequence, 169 residues long: Der GTPase-activating protein YihI (169 aa).

Disordered stretches follow at residues Met1–Glu100 and Gly144–Asn169. The segment covering Ser10–Lys19 has biased composition (basic residues). Basic and acidic residues predominate over residues Thr20 to Asp30. Residues Arg31–His40 are compositionally biased toward basic residues. A compositionally biased stretch (polar residues) spans Gly49 to Gln58. The span at Tyr147–Gln159 shows a compositional bias: acidic residues. Over residues Glu160–Asn169 the composition is skewed to basic and acidic residues.

It belongs to the YihI family. In terms of assembly, interacts with Der.

In terms of biological role, a GTPase-activating protein (GAP) that modifies Der/EngA GTPase function. May play a role in ribosome biogenesis. The protein is Der GTPase-activating protein YihI of Escherichia coli O6:H1 (strain CFT073 / ATCC 700928 / UPEC).